Here is a 289-residue protein sequence, read N- to C-terminus: E3 ubiquitin-protein ligase MARCHF8 (289 aa).

The interval 1 to 68 (MNMPLHQISA…SAPVSSFPRT (68 aa)) is disordered. Positions 25-39 (KTKEKEREEQNEKTL) are enriched in basic and acidic residues. Over residues 50-64 (SKAGGSSVASAPVSS) the composition is skewed to low complexity. The RING-CH-type zinc finger occupies 70-131 (VTPSNQDICR…ELCKYEFIME (62 aa)). Zn(2+) contacts are provided by C78, C81, C95, C97, H105, C108, C121, and C124. 2 consecutive transmembrane segments (helical) span residues 155 to 175 (CSVT…YVLI) and 195 to 215 (FWTK…FMYV).

In terms of assembly, interacts with CD86.

The protein resides in the golgi apparatus membrane. The protein localises to the endoplasmic reticulum membrane. It is found in the cytoplasmic vesicle membrane. It localises to the lysosome membrane. Its subcellular location is the early endosome membrane. It carries out the reaction S-ubiquitinyl-[E2 ubiquitin-conjugating enzyme]-L-cysteine + [acceptor protein]-L-lysine = [E2 ubiquitin-conjugating enzyme]-L-cysteine + N(6)-ubiquitinyl-[acceptor protein]-L-lysine.. The protein operates within protein modification; protein ubiquitination. Its function is as follows. E3 ubiquitin-protein ligase that plays several important roles in innate immunity and adaptive immunity. Mediates ubiquitination of CD86 and MHC class II proteins, such as HLA-DR alpha and beta, and promotes their subsequent endocytosis and sorting to lysosomes via multivesicular bodies. Possesses a very broad antiviral activity by specifically inactivating different viral fusion proteins. Targets and ubiquitinates cytoplasmic lysine residues of viral envelope glycoproteins with single transmembrane domains leading to their lysosomal degradation. Mediates the regulation of constitutive ubiquitination and trafficking of the viral restriction factor BST2 within the endocytic pathway. Plays a role in maintenance of immune tolerance to self by promoting the turnover and proteasomal degradation of PD-L1/CD274 via ubiquitination. Catalyzes the 'Lys-63'-linked polyubiquitylation of cGAS thereby inhibiting its DNA binding ability and impairing its antiviral innate immunity. Negatively regulates IL7-mediated T-cell homeostasis by mediating 'Lys-27'-linked polyubiquitination of IL7R, leading to its lysosomal degradation. The protein is E3 ubiquitin-protein ligase MARCHF8 (MARCHF8) of Bos taurus (Bovine).